A 611-amino-acid chain; its full sequence is Conglutin beta 1 (611 aa).

Residues Met-1–Gly-30 form the signal peptide. Basic and acidic residues-rich tracts occupy residues Lys-32–Ser-82 and Ser-130–Glu-141. Disordered regions lie at residues Lys-32 to Gln-194 and Leu-384 to Ser-407. Over residues Gln-142–Gly-151 the composition is skewed to low complexity. The span at Ser-152–Arg-181 shows a compositional bias: basic and acidic residues. Positions Tyr-186–Glu-344 constitute a Cupin type-1 1 domain. Low complexity predominate over residues Ser-390–Pro-402. Residues Phe-403–Glu-569 enclose the Cupin type-1 2 domain. N-linked (GlcNAc...) asparagine glycosylation occurs at Asn-434. The segment at Asp-476–Val-495 is disordered. Positions Glu-483–Glu-492 are enriched in acidic residues. Asn-519 carries N-linked (GlcNAc...) asparagine glycosylation. The segment covering Phe-580 to Gln-589 has biased composition (low complexity). The tract at residues Phe-580–Arg-600 is disordered.

It belongs to the 7S seed storage protein family. As to quaternary structure, component of globulins complexes which accumulate in seeds.

Its function is as follows. Seed storage protein. Accumulates during seed development and is hydrolyzed after germination to provide a carbon and nitrogen source for the developing seedling. The polypeptide is Conglutin beta 1 (Lupinus angustifolius (Narrow-leaved blue lupine)).